We begin with the raw amino-acid sequence, 328 residues long: Peroxidase 71 (328 aa).

Residues M1–G23 form the signal peptide. 4 disulfides stabilise this stretch: C44–C120, C77–C82, C126–C324, and C204–C235. Catalysis depends on H75, which acts as the Proton acceptor. Residues D76, V79, G81, D83, and S85 each contribute to the Ca(2+) site. A substrate-binding site is contributed by P167. H197 provides a ligand contact to heme b. T198 is a Ca(2+) binding site. Residue N213 is glycosylated (N-linked (GlcNAc...) asparagine). Residues D248, S251, and D256 each coordinate Ca(2+). N-linked (GlcNAc...) asparagine glycosylation is present at N262.

The protein belongs to the peroxidase family. Classical plant (class III) peroxidase subfamily. Heme b serves as cofactor. The cofactor is Ca(2+). As to expression, slightly expressed in roots.

It is found in the secreted. It catalyses the reaction 2 a phenolic donor + H2O2 = 2 a phenolic radical donor + 2 H2O. In terms of biological role, removal of H(2)O(2), oxidation of toxic reductants, biosynthesis and degradation of lignin, suberization, auxin catabolism, response to environmental stresses such as wounding, pathogen attack and oxidative stress. These functions might be dependent on each isozyme/isoform in each plant tissue. The protein is Peroxidase 71 (PER71) of Arabidopsis thaliana (Mouse-ear cress).